The chain runs to 435 residues: Glutamate-1-semialdehyde 2,1-aminomutase (435 aa).

Lys-266 bears the N6-(pyridoxal phosphate)lysine mark.

The protein belongs to the class-III pyridoxal-phosphate-dependent aminotransferase family. HemL subfamily. As to quaternary structure, homodimer. It depends on pyridoxal 5'-phosphate as a cofactor.

Its subcellular location is the cytoplasm. The catalysed reaction is (S)-4-amino-5-oxopentanoate = 5-aminolevulinate. It functions in the pathway porphyrin-containing compound metabolism; protoporphyrin-IX biosynthesis; 5-aminolevulinate from L-glutamyl-tRNA(Glu): step 2/2. The chain is Glutamate-1-semialdehyde 2,1-aminomutase from Nitrosomonas europaea (strain ATCC 19718 / CIP 103999 / KCTC 2705 / NBRC 14298).